A 192-amino-acid chain; its full sequence is Probable apo-citrate lyase phosphoribosyl-dephospho-CoA transferase (192 aa).

The protein belongs to the CitX family.

It carries out the reaction apo-[citrate lyase ACP] + 2'-(5''-triphospho-alpha-D-ribosyl)-3'-dephospho-CoA = holo-[citrate lyase ACP] + diphosphate. Its function is as follows. Transfers 2-(5''-triphosphoribosyl)-3'-dephosphocoenzyme-A on a serine residue to the apo-acyl carrier protein (gamma chain) of the citrate lyase to yield holo-acyl carrier protein. The protein is Probable apo-citrate lyase phosphoribosyl-dephospho-CoA transferase of Streptococcus pyogenes serotype M3 (strain ATCC BAA-595 / MGAS315).